Here is a 420-residue protein sequence, read N- to C-terminus: Aminoacyltransferase FemA (420 aa).

This sequence belongs to the FemABX family. As to quaternary structure, homodimer. Interacts with FemB.

Its subcellular location is the cytoplasm. It carries out the reaction beta-D-GlcNAc-(1-&gt;4)-Mur2Ac(oyl-L-Ala-D-isoglutaminyl-L-Lys-(N(6)-Gly)-D-Ala-D-Ala)-di-trans,octa-cis-undecaprenyl diphosphate + 2 glycyl-tRNA(Gly) = MurNAc-L-Ala-D-isoglutaminyl-L-Lys-(N(6)-tri-Gly)-D-Ala-D-Ala-diphospho-di-trans,octa-cis-undecaprenyl-GlcNAc + 2 tRNA(Gly) + 2 H(+). Functionally, catalyzes the formation of the pentaglycine interpeptide bridge, which is characteristic of the S.aureus peptidoglycan. Adds glycines 2 and 3 of the pentaglycine bridge, using glycyl-tRNA(Gly) as donor. Involved in resistance to methicillin. This chain is Aminoacyltransferase FemA (femA), found in Staphylococcus aureus (strain Mu50 / ATCC 700699).